The primary structure comprises 384 residues: Queuine tRNA-ribosyltransferase (384 aa).

The active-site Proton acceptor is D92. Substrate is bound by residues 92 to 96 (DSGGF), D146, Q190, and G217. Positions 248–254 (GVGRPED) are RNA binding. D267 serves as the catalytic Nucleophile. The segment at 272–276 (TRHAR) is RNA binding; important for wobble base 34 recognition. Residues C305, C307, C310, and H337 each coordinate Zn(2+).

This sequence belongs to the queuine tRNA-ribosyltransferase family. In terms of assembly, homodimer. Within each dimer, one monomer is responsible for RNA recognition and catalysis, while the other monomer binds to the replacement base PreQ1. It depends on Zn(2+) as a cofactor.

The catalysed reaction is 7-aminomethyl-7-carbaguanine + guanosine(34) in tRNA = 7-aminomethyl-7-carbaguanosine(34) in tRNA + guanine. It functions in the pathway tRNA modification; tRNA-queuosine biosynthesis. Catalyzes the base-exchange of a guanine (G) residue with the queuine precursor 7-aminomethyl-7-deazaguanine (PreQ1) at position 34 (anticodon wobble position) in tRNAs with GU(N) anticodons (tRNA-Asp, -Asn, -His and -Tyr). Catalysis occurs through a double-displacement mechanism. The nucleophile active site attacks the C1' of nucleotide 34 to detach the guanine base from the RNA, forming a covalent enzyme-RNA intermediate. The proton acceptor active site deprotonates the incoming PreQ1, allowing a nucleophilic attack on the C1' of the ribose to form the product. After dissociation, two additional enzymatic reactions on the tRNA convert PreQ1 to queuine (Q), resulting in the hypermodified nucleoside queuosine (7-(((4,5-cis-dihydroxy-2-cyclopenten-1-yl)amino)methyl)-7-deazaguanosine). This Xylella fastidiosa (strain 9a5c) protein is Queuine tRNA-ribosyltransferase.